A 256-amino-acid polypeptide reads, in one-letter code: Trans-aconitate 2-methyltransferase (256 aa).

It belongs to the methyltransferase superfamily. Tam family.

The protein localises to the cytoplasm. The enzyme catalyses trans-aconitate + S-adenosyl-L-methionine = (E)-3-(methoxycarbonyl)pent-2-enedioate + S-adenosyl-L-homocysteine. Its function is as follows. Catalyzes the S-adenosylmethionine monomethyl esterification of trans-aconitate. The polypeptide is Trans-aconitate 2-methyltransferase (Rhizobium rhizogenes (strain K84 / ATCC BAA-868) (Agrobacterium radiobacter)).